Here is a 156-residue protein sequence, read N- to C-terminus: Small ribosomal subunit protein uS7 (156 aa).

This sequence belongs to the universal ribosomal protein uS7 family. In terms of assembly, part of the 30S ribosomal subunit. Contacts proteins S9 and S11.

One of the primary rRNA binding proteins, it binds directly to 16S rRNA where it nucleates assembly of the head domain of the 30S subunit. Is located at the subunit interface close to the decoding center, probably blocks exit of the E-site tRNA. This chain is Small ribosomal subunit protein uS7, found in Parafrankia sp. (strain EAN1pec).